The primary structure comprises 388 residues: 2-epi-5-epi-valiolone synthase (388 aa).

NAD(+) contacts are provided by residues 92 to 95 (ERNK), 124 to 128 (GIVAD), 148 to 149 (TT), Lys161, Lys170, and 188 to 191 (LLAT). Zn(2+) contacts are provided by Glu203, His267, and His283.

The protein belongs to the sugar phosphate cyclases superfamily. EEVS-like family. The cofactor is NAD(+). Requires Co(2+) as cofactor. It depends on Zn(2+) as a cofactor.

It carries out the reaction D-sedoheptulose 7-phosphate = 2-epi-5-epi-valiolone + phosphate. Catalyzes the cyclization of D-sedoheptulose 7-phosphate to 2-epi-5-epi-valiolone. Probably involved in acarbose biosynthesis. This is 2-epi-5-epi-valiolone synthase from Streptomyces glaucescens.